A 40-amino-acid polypeptide reads, in one-letter code: Photosystem I reaction center subunit IX (40 aa).

A helical membrane pass occupies residues 12–34 (APVLLTAWMSLTAGMIIEIQRFF).

Belongs to the PsaJ family.

The protein localises to the plastid. It localises to the chloroplast thylakoid membrane. In terms of biological role, may help in the organization of the PsaE and PsaF subunits. This chain is Photosystem I reaction center subunit IX, found in Emiliania huxleyi (Coccolithophore).